Consider the following 277-residue polypeptide: S-formylglutathione hydrolase FrmB (277 aa).

Residues Ser145, Asp221, and His254 each act as charge relay system in the active site.

Belongs to the esterase D family.

It carries out the reaction S-formylglutathione + H2O = formate + glutathione + H(+). In terms of biological role, serine hydrolase involved in the detoxification of formaldehyde. Hydrolyzes S-formylglutathione to glutathione and formate. In Escherichia coli O1:K1 / APEC, this protein is S-formylglutathione hydrolase FrmB (frmB).